The following is a 510-amino-acid chain: Light-independent protochlorophyllide reductase subunit B (510 aa).

Position 36 (Asp-36) interacts with [4Fe-4S] cluster. Asp-296 functions as the Proton donor in the catalytic mechanism. Residue 431 to 432 (GM) coordinates substrate.

The protein belongs to the ChlB/BchB/BchZ family. In terms of assembly, protochlorophyllide reductase is composed of three subunits; ChlL, ChlN and ChlB. Forms a heterotetramer of two ChlB and two ChlN subunits. [4Fe-4S] cluster is required as a cofactor.

It is found in the plastid. The protein resides in the chloroplast. It carries out the reaction chlorophyllide a + oxidized 2[4Fe-4S]-[ferredoxin] + 2 ADP + 2 phosphate = protochlorophyllide a + reduced 2[4Fe-4S]-[ferredoxin] + 2 ATP + 2 H2O. The protein operates within porphyrin-containing compound metabolism; chlorophyll biosynthesis (light-independent). In terms of biological role, component of the dark-operative protochlorophyllide reductase (DPOR) that uses Mg-ATP and reduced ferredoxin to reduce ring D of protochlorophyllide (Pchlide) to form chlorophyllide a (Chlide). This reaction is light-independent. The NB-protein (ChlN-ChlB) is the catalytic component of the complex. This Angiopteris evecta (Mule's foot fern) protein is Light-independent protochlorophyllide reductase subunit B.